A 483-amino-acid chain; its full sequence is Bifunctional protein HldE (483 aa).

Residues 1–327 are ribokinase; sequence MDDALAHLPR…ACASSAQGEP (327 aa). 201–204 contributes to the ATP binding site; the sequence is NRKE. D272 is a catalytic residue. The tract at residues 354–483 is cytidylyltransferase; sequence FTNGCFDLLH…TTNLIARMNS (130 aa).

It in the N-terminal section; belongs to the carbohydrate kinase PfkB family. The protein in the C-terminal section; belongs to the cytidylyltransferase family. As to quaternary structure, homodimer.

The enzyme catalyses D-glycero-beta-D-manno-heptose 7-phosphate + ATP = D-glycero-beta-D-manno-heptose 1,7-bisphosphate + ADP + H(+). It catalyses the reaction D-glycero-beta-D-manno-heptose 1-phosphate + ATP + H(+) = ADP-D-glycero-beta-D-manno-heptose + diphosphate. It functions in the pathway nucleotide-sugar biosynthesis; ADP-L-glycero-beta-D-manno-heptose biosynthesis; ADP-L-glycero-beta-D-manno-heptose from D-glycero-beta-D-manno-heptose 7-phosphate: step 1/4. Its pathway is nucleotide-sugar biosynthesis; ADP-L-glycero-beta-D-manno-heptose biosynthesis; ADP-L-glycero-beta-D-manno-heptose from D-glycero-beta-D-manno-heptose 7-phosphate: step 3/4. Its function is as follows. Catalyzes the phosphorylation of D-glycero-D-manno-heptose 7-phosphate at the C-1 position to selectively form D-glycero-beta-D-manno-heptose-1,7-bisphosphate. In terms of biological role, catalyzes the ADP transfer from ATP to D-glycero-beta-D-manno-heptose 1-phosphate, yielding ADP-D-glycero-beta-D-manno-heptose. In Caulobacter vibrioides (strain ATCC 19089 / CIP 103742 / CB 15) (Caulobacter crescentus), this protein is Bifunctional protein HldE.